The following is a 136-amino-acid chain: Large ribosomal subunit protein uL16 (136 aa).

This sequence belongs to the universal ribosomal protein uL16 family. In terms of assembly, part of the 50S ribosomal subunit.

Binds 23S rRNA and is also seen to make contacts with the A and possibly P site tRNAs. The chain is Large ribosomal subunit protein uL16 from Buchnera aphidicola subsp. Cinara cedri (strain Cc).